The following is a 740-amino-acid chain: Ion-translocating oxidoreductase complex subunit C (740 aa).

2 consecutive 4Fe-4S ferredoxin-type domains span residues 369-397 and 407-436; these read GEPQEEQSCIRCSACADACPADLLPQQLY and KATTHNIADCIECGACAWVCPSNIPLVQYF. C377, C380, C383, C387, C416, C419, C422, and C426 together coordinate [4Fe-4S] cluster. Positions 602 to 714 are disordered; that stretch reads KLEQQQANAE…NAEPEEQIDP (113 aa). Over residues 605-615 the composition is skewed to low complexity; the sequence is QQQANAEPEQQ.

Belongs to the 4Fe4S bacterial-type ferredoxin family. RnfC subfamily. The complex is composed of six subunits: RsxA, RsxB, RsxC, RsxD, RsxE and RsxG. Requires [4Fe-4S] cluster as cofactor.

It localises to the cell inner membrane. In terms of biological role, part of a membrane-bound complex that couples electron transfer with translocation of ions across the membrane. Required to maintain the reduced state of SoxR. The protein is Ion-translocating oxidoreductase complex subunit C of Escherichia coli O17:K52:H18 (strain UMN026 / ExPEC).